We begin with the raw amino-acid sequence, 284 residues long: 4-diphosphocytidyl-2-C-methyl-D-erythritol kinase (284 aa).

Lys14 is an active-site residue. 98–108 contacts ATP; the sequence is PMGGGLGGGSS. Asp140 is an active-site residue.

It belongs to the GHMP kinase family. IspE subfamily.

It carries out the reaction 4-CDP-2-C-methyl-D-erythritol + ATP = 4-CDP-2-C-methyl-D-erythritol 2-phosphate + ADP + H(+). It participates in isoprenoid biosynthesis; isopentenyl diphosphate biosynthesis via DXP pathway; isopentenyl diphosphate from 1-deoxy-D-xylulose 5-phosphate: step 3/6. In terms of biological role, catalyzes the phosphorylation of the position 2 hydroxy group of 4-diphosphocytidyl-2C-methyl-D-erythritol. This is 4-diphosphocytidyl-2-C-methyl-D-erythritol kinase from Shewanella baltica (strain OS185).